A 159-amino-acid polypeptide reads, in one-letter code: Transcription antitermination protein NusB (159 aa).

Belongs to the NusB family.

In terms of biological role, involved in transcription antitermination. Required for transcription of ribosomal RNA (rRNA) genes. Binds specifically to the boxA antiterminator sequence of the ribosomal RNA (rrn) operons. The polypeptide is Transcription antitermination protein NusB (Xanthomonas axonopodis pv. citri (strain 306)).